The chain runs to 373 residues: Putative zinc finger protein 012R (373 aa).

The segment at 2–29 (FECTHCDLHFESKSKLATHQKTKKCTAH) adopts a C2H2-type zinc-finger fold.

It belongs to the IIV-6 302L family.

The chain is Putative zinc finger protein 012R from Invertebrate iridescent virus 3 (IIV-3).